Here is a 572-residue protein sequence, read N- to C-terminus: Methionine--tRNA ligase (572 aa).

The 'HIGH' region motif lies at 11-21 (PYINGVKHLGN). The Zn(2+) site is built by Cys-143, Cys-146, Cys-156, and Cys-159. The 'KMSKS' region motif lies at 341-345 (KFSTS). An ATP-binding site is contributed by Thr-344.

This sequence belongs to the class-I aminoacyl-tRNA synthetase family. MetG type 1 subfamily. Monomer. Requires Zn(2+) as cofactor.

Its subcellular location is the cytoplasm. It carries out the reaction tRNA(Met) + L-methionine + ATP = L-methionyl-tRNA(Met) + AMP + diphosphate. In terms of biological role, is required not only for elongation of protein synthesis but also for the initiation of all mRNA translation through initiator tRNA(fMet) aminoacylation. This Maricaulis maris (strain MCS10) (Caulobacter maris) protein is Methionine--tRNA ligase.